A 207-amino-acid chain; its full sequence is MIQVPVKDANNQEVRSTELNESVFGREIRADLLGMAVNYQLAKRRLGTATVLGRSDVRGGGKKPYRQKGTGNARQGTIRAPQFRTGGIVFGPQQRDYSHKLNKKVRKLALQTALSVKASSEEMVVVDKLELASIKTKEMKALLSTLGAARSTFLVVKELSNEIVLSARNIPNVMVADVDGVNVYDLLRYEKLVITEEAVRSLEEKLA.

The interval 54–74 (RSDVRGGGKKPYRQKGTGNAR) is disordered.

This sequence belongs to the universal ribosomal protein uL4 family. As to quaternary structure, part of the 50S ribosomal subunit.

Functionally, one of the primary rRNA binding proteins, this protein initially binds near the 5'-end of the 23S rRNA. It is important during the early stages of 50S assembly. It makes multiple contacts with different domains of the 23S rRNA in the assembled 50S subunit and ribosome. Its function is as follows. Forms part of the polypeptide exit tunnel. The chain is Large ribosomal subunit protein uL4 from Magnetococcus marinus (strain ATCC BAA-1437 / JCM 17883 / MC-1).